The chain runs to 510 residues: ATP synthase subunit alpha 1 (510 aa).

Gly-167–Thr-174 serves as a coordination point for ATP.

The protein belongs to the ATPase alpha/beta chains family. As to quaternary structure, F-type ATPases have 2 components, CF(1) - the catalytic core - and CF(0) - the membrane proton channel. CF(1) has five subunits: alpha(3), beta(3), gamma(1), delta(1), epsilon(1). CF(0) has three main subunits: a(1), b(2) and c(9-12). The alpha and beta chains form an alternating ring which encloses part of the gamma chain. CF(1) is attached to CF(0) by a central stalk formed by the gamma and epsilon chains, while a peripheral stalk is formed by the delta and b chains.

The protein localises to the cell inner membrane. It carries out the reaction ATP + H2O + 4 H(+)(in) = ADP + phosphate + 5 H(+)(out). Its function is as follows. Produces ATP from ADP in the presence of a proton gradient across the membrane. The alpha chain is a regulatory subunit. The sequence is that of ATP synthase subunit alpha 1 from Paraburkholderia xenovorans (strain LB400).